Reading from the N-terminus, the 238-residue chain is ATP synthase subunit O, mitochondrial (238 aa).

The transit peptide at 1–36 (MANRFRSGISFFKTIAVTDSVSSVRSKSLFPALRTY) directs the protein to the mitochondrion. Thr90 is modified (phosphothreonine).

The protein belongs to the ATPase delta chain family. As to quaternary structure, F-type ATPases have 2 components, CF(1) - the catalytic core - and CF(0) - the membrane proton channel. CF(1) has five subunits: alpha(3), beta(3), gamma(1), delta(1), epsilon(1). CF(0) has three main subunits: a, b and c.

The protein localises to the mitochondrion. It is found in the mitochondrion inner membrane. Its function is as follows. Mitochondrial membrane ATP synthase (F(1)F(0) ATP synthase or Complex V) produces ATP from ADP in the presence of a proton gradient across the membrane which is generated by electron transport complexes of the respiratory chain. F-type ATPases consist of two structural domains, F(1) - containing the extramembraneous catalytic core and F(0) - containing the membrane proton channel, linked together by a central stalk and a peripheral stalk. During catalysis, ATP synthesis in the catalytic domain of F(1) is coupled via a rotary mechanism of the central stalk subunits to proton translocation. Part of the complex F(0) domain and the peripheric stalk, which acts as a stator to hold the catalytic alpha(3)beta(3) subcomplex and subunit a/ATP6 static relative to the rotary elements. The sequence is that of ATP synthase subunit O, mitochondrial from Arabidopsis thaliana (Mouse-ear cress).